We begin with the raw amino-acid sequence, 121 residues long: Ribosome-binding factor A (121 aa).

The protein belongs to the RbfA family. As to quaternary structure, monomer. Binds 30S ribosomal subunits, but not 50S ribosomal subunits or 70S ribosomes.

It localises to the cytoplasm. Functionally, one of several proteins that assist in the late maturation steps of the functional core of the 30S ribosomal subunit. Associates with free 30S ribosomal subunits (but not with 30S subunits that are part of 70S ribosomes or polysomes). Required for efficient processing of 16S rRNA. May interact with the 5'-terminal helix region of 16S rRNA. In Hydrogenovibrio crunogenus (strain DSM 25203 / XCL-2) (Thiomicrospira crunogena), this protein is Ribosome-binding factor A.